A 197-amino-acid polypeptide reads, in one-letter code: Peptide deformylase (197 aa).

Fe cation-binding residues include Cys106 and His148. Residue Glu149 is part of the active site. A Fe cation-binding site is contributed by His152.

The protein belongs to the polypeptide deformylase family. Fe(2+) is required as a cofactor.

The enzyme catalyses N-terminal N-formyl-L-methionyl-[peptide] + H2O = N-terminal L-methionyl-[peptide] + formate. In terms of biological role, removes the formyl group from the N-terminal Met of newly synthesized proteins. Requires at least a dipeptide for an efficient rate of reaction. N-terminal L-methionine is a prerequisite for activity but the enzyme has broad specificity at other positions. The chain is Peptide deformylase from Mycolicibacterium vanbaalenii (strain DSM 7251 / JCM 13017 / BCRC 16820 / KCTC 9966 / NRRL B-24157 / PYR-1) (Mycobacterium vanbaalenii).